A 278-amino-acid chain; its full sequence is Large ribosomal subunit protein uL24m (278 aa).

Residues 109–142 (FFPGDLVQVMVGKDKGRQGLVLTISRDSSEVVVD) form the KOW domain.

The protein belongs to the universal ribosomal protein uL24 family.

It is found in the mitochondrion. The protein is Large ribosomal subunit protein uL24m (mrpl-24) of Caenorhabditis briggsae.